Consider the following 164-residue polypeptide: Large ribosomal subunit protein bL17 (164 aa).

The interval 127 to 164 (RARTDSVPARKGAGKKDASRVSGTVPDGQSQKIGKKKE) is disordered.

This sequence belongs to the bacterial ribosomal protein bL17 family. Part of the 50S ribosomal subunit. Contacts protein L32.

The protein is Large ribosomal subunit protein bL17 of Treponema pallidum (strain Nichols).